The chain runs to 101 residues: uncharacterized protein (101 aa).

This is an uncharacterized protein from Neurospora crassa (strain ATCC 24698 / 74-OR23-1A / CBS 708.71 / DSM 1257 / FGSC 987).